We begin with the raw amino-acid sequence, 784 residues long: Copal-8-ol diphosphate hydratase TPSSA9, chloroplastic (784 aa).

Position 240 (arginine 240) interacts with substrate. Mg(2+) is bound by residues aspartate 372 and aspartate 374. Residues 372–375 carry the DXDD motif motif; it reads DIDD. Arginine 459 serves as a coordination point for substrate.

The protein belongs to the terpene synthase family.

It is found in the plastid. Its subcellular location is the chloroplast. The enzyme catalyses (2E,6E,10E)-geranylgeranyl diphosphate + H2O = 8-hydroxycopalyl diphosphate. Its pathway is secondary metabolite biosynthesis; terpenoid biosynthesis. Involved in the biosynthesis of labdane-type diterpenoid including sclareol, a diterpene-diol that is used as fragrance and flavoring, and has anticancer effects (able to kill leukemic and colon cancer cells by apoptosis). Sclareol can also be used as synthesis precursor of ambergris substitution fragance products such as ambrox. Terpene synthase that produces 8-hydroxycopalyl diphosphate from geranylgeranyl diphosphate (GGPP). This is Copal-8-ol diphosphate hydratase TPSSA9, chloroplastic from Salvia sclarea (Clary sage).